The chain runs to 69 residues: Ubiquitin-ribosomal protein eL40 fusion protein (69 aa).

One can recognise a Ubiquitin-like domain in the interval 1-17 (NIQKESTLHLVLRLRGG). Residue K4 forms a Glycyl lysine isopeptide (Lys-Gly) (interchain with G-Cter in ubiquitin) linkage. A Glycyl lysine isopeptide (Gly-Lys) (interchain with K-? in acceptor proteins) cross-link involves residue G17. Position 39 is an N6,N6,N6-trimethyllysine (K39).

It in the N-terminal section; belongs to the ubiquitin family. The protein in the C-terminal section; belongs to the eukaryotic ribosomal protein eL40 family. In terms of assembly, part of the 60S ribosomal subunit. In terms of processing, trimethylation of Lys-39 ('Lys-22' of the mature chain) by SMYD5 promotes translation elongation and protein synthesis.

It localises to the cytoplasm. The protein localises to the nucleus. Exists either covalently attached to another protein, or free (unanchored). When covalently bound, it is conjugated to target proteins via an isopeptide bond either as a monomer (monoubiquitin), a polymer linked via different Lys residues of the ubiquitin (polyubiquitin chains) or a linear polymer linked via the initiator Met of the ubiquitin (linear polyubiquitin chains). Polyubiquitin chains, when attached to a target protein, have different functions depending on the Lys residue of the ubiquitin that is linked: Lys-6-linked may be involved in DNA repair; Lys-11-linked is involved in ERAD (endoplasmic reticulum-associated degradation) and in cell-cycle regulation; Lys-29-linked is involved in proteotoxic stress response and cell cycle; Lys-33-linked is involved in kinase modification; Lys-48-linked is involved in protein degradation via the proteasome; Lys-63-linked is involved in endocytosis, DNA-damage responses as well as in signaling processes leading to activation of the transcription factor NF-kappa-B. Linear polymer chains formed via attachment by the initiator Met lead to cell signaling. Ubiquitin is usually conjugated to Lys residues of target proteins, however, in rare cases, conjugation to Cys or Ser residues has been observed. When polyubiquitin is free (unanchored-polyubiquitin), it also has distinct roles, such as in activation of protein kinases, and in signaling. Its function is as follows. Component of the 60S subunit of the ribosome. The protein is Ubiquitin-ribosomal protein eL40 fusion protein (UBA52) of Gallus gallus (Chicken).